Consider the following 247-residue polypeptide: 1-(5-phosphoribosyl)-5-[(5-phosphoribosylamino)methylideneamino] imidazole-4-carboxamide isomerase (247 aa).

Asp-16 serves as the catalytic Proton acceptor. Asp-135 (proton donor) is an active-site residue.

This sequence belongs to the HisA/HisF family.

It is found in the cytoplasm. The catalysed reaction is 1-(5-phospho-beta-D-ribosyl)-5-[(5-phospho-beta-D-ribosylamino)methylideneamino]imidazole-4-carboxamide = 5-[(5-phospho-1-deoxy-D-ribulos-1-ylimino)methylamino]-1-(5-phospho-beta-D-ribosyl)imidazole-4-carboxamide. Its pathway is amino-acid biosynthesis; L-histidine biosynthesis; L-histidine from 5-phospho-alpha-D-ribose 1-diphosphate: step 4/9. The polypeptide is 1-(5-phosphoribosyl)-5-[(5-phosphoribosylamino)methylideneamino] imidazole-4-carboxamide isomerase (Paenarthrobacter aurescens (strain TC1)).